We begin with the raw amino-acid sequence, 384 residues long: S-adenosylmethionine synthase (384 aa).

Residue His15 coordinates ATP. Residue Asp17 participates in Mg(2+) binding. K(+) is bound at residue Glu43. Positions 56 and 99 each coordinate L-methionine. Residues 99–109 (QSPDINQGVDR) are flexible loop. ATP contacts are provided by residues 164 to 166 (DAK), 230 to 231 (RF), Asp239, 245 to 246 (RK), Ala262, and Lys266. Asp239 is a binding site for L-methionine. Residue Lys270 coordinates L-methionine.

It belongs to the AdoMet synthase family. As to quaternary structure, homotetramer; dimer of dimers. The cofactor is Mg(2+). K(+) serves as cofactor.

The protein resides in the cytoplasm. It carries out the reaction L-methionine + ATP + H2O = S-adenosyl-L-methionine + phosphate + diphosphate. It functions in the pathway amino-acid biosynthesis; S-adenosyl-L-methionine biosynthesis; S-adenosyl-L-methionine from L-methionine: step 1/1. In terms of biological role, catalyzes the formation of S-adenosylmethionine (AdoMet) from methionine and ATP. The overall synthetic reaction is composed of two sequential steps, AdoMet formation and the subsequent tripolyphosphate hydrolysis which occurs prior to release of AdoMet from the enzyme. In Escherichia coli (strain K12 / DH10B), this protein is S-adenosylmethionine synthase.